A 184-amino-acid chain; its full sequence is Photosystem I assembly protein Ycf4 (184 aa).

A run of 2 helical transmembrane segments spans residues 19 to 39 (ISNF…LLVG) and 57 to 77 (IIFF…LFIS).

It belongs to the Ycf4 family.

The protein localises to the plastid. Its subcellular location is the chloroplast thylakoid membrane. Functionally, seems to be required for the assembly of the photosystem I complex. This is Photosystem I assembly protein Ycf4 from Cucumis sativus (Cucumber).